The sequence spans 242 residues: tRNA (guanine-N(1)-)-methyltransferase (242 aa).

S-adenosyl-L-methionine-binding positions include Gly-111 and Ile-130–Leu-135.

It belongs to the RNA methyltransferase TrmD family. As to quaternary structure, homodimer.

It localises to the cytoplasm. The catalysed reaction is guanosine(37) in tRNA + S-adenosyl-L-methionine = N(1)-methylguanosine(37) in tRNA + S-adenosyl-L-homocysteine + H(+). Its function is as follows. Specifically methylates guanosine-37 in various tRNAs. The sequence is that of tRNA (guanine-N(1)-)-methyltransferase from Onion yellows phytoplasma (strain OY-M).